Consider the following 375-residue polypeptide: Erythronate-4-phosphate dehydrogenase (375 aa).

Residues S45 and T66 each coordinate substrate. Residues D146, T175, 206-208 (ASR), and D232 contribute to the NAD(+) site. R208 is a catalytic residue. The active site involves E237. Residue H254 is the Proton donor of the active site. G257 contributes to the NAD(+) binding site. Y258 lines the substrate pocket.

Belongs to the D-isomer specific 2-hydroxyacid dehydrogenase family. PdxB subfamily. In terms of assembly, homodimer.

The protein resides in the cytoplasm. The enzyme catalyses 4-phospho-D-erythronate + NAD(+) = (R)-3-hydroxy-2-oxo-4-phosphooxybutanoate + NADH + H(+). Its pathway is cofactor biosynthesis; pyridoxine 5'-phosphate biosynthesis; pyridoxine 5'-phosphate from D-erythrose 4-phosphate: step 2/5. Catalyzes the oxidation of erythronate-4-phosphate to 3-hydroxy-2-oxo-4-phosphonooxybutanoate. This is Erythronate-4-phosphate dehydrogenase from Proteus mirabilis (strain HI4320).